A 217-amino-acid chain; its full sequence is MYLFHLCLVFACVPCPTFQASKLCLGWLWGMDIDPYKEFGSSYQLLNFLPLDFFPDLNALVDTATALYEEELTGREHCSPHHTAIRQALVCWDELTKLIAWMSSNITSEQVRTIIVNHVNDTWGLKVRQSLWFHLSCLTFGQHTVQEFLVSFVVWIRTPAPYRPPNAPILSTLPEHTVIRRGGARASRSPRRRTPSPRRRRSQSPRRRRSQSPSANC.

An N-terminal signal peptide occupies residues Met-1 to Gln-19. An HBEAG region spans residues Gly-26–Leu-28. The disordered stretch occupies residues Arg-180–Cys-217. A compositionally biased stretch (basic residues) spans Arg-188 to Ser-210. The 1; half-length repeat unit spans residues Ser-189–Pro-195. The segment at Ser-189–Gln-211 is 3 X 8 AA repeats of S-P-R-R-R-R-S-Q. Positions Ser-189 to Cys-217 are excised as a propeptide. Repeat copies occupy residues Ser-196 to Gln-203 and Ser-204 to Gln-211.

This sequence belongs to the orthohepadnavirus precore antigen family. As to quaternary structure, homodimerizes. Phosphorylated. Post-translationally, cleaved by host furin.

The protein localises to the secreted. The protein resides in the host nucleus. Functionally, may regulate immune response to the intracellular capsid in acting as a T-cell tolerogen, by having an immunoregulatory effect which prevents destruction of infected cells by cytotoxic T-cells. This immune regulation may predispose to chronicity during perinatal infections and prevent severe liver injury during adult infections. This Marmota monax (Woodchuck) protein is External core antigen.